Consider the following 140-residue polypeptide: Alpha-lactalbumin (140 aa).

Positions 1 to 19 (MMSLLSLLLLGIALPATQA) are cleaved as a signal peptide. In terms of domain architecture, C-type lysozyme spans 20–140 (IDYRKCQASQ…CIEDLDQWRC (121 aa)). 4 disulfide bridges follow: C25–C140, C47–C131, C80–C96, and C92–C110. N63 is a glycosylation site (N-linked (GlcNAc...) asparagine). Ca(2+) contacts are provided by K98, D101, D103, D106, and D107.

This sequence belongs to the glycosyl hydrolase 22 family. In terms of assembly, lactose synthase (LS) is a heterodimer of a catalytic component, beta1,4-galactosyltransferase (beta4Gal-T1) and a regulatory component, alpha-lactalbumin (LA). Mammary gland specific. Secreted in milk.

Its subcellular location is the secreted. In terms of biological role, regulatory subunit of lactose synthase, changes the substrate specificity of galactosyltransferase in the mammary gland making glucose a good acceptor substrate for this enzyme. This enables LS to synthesize lactose, the major carbohydrate component of milk. In other tissues, galactosyltransferase transfers galactose onto the N-acetylglucosamine of the oligosaccharide chains in glycoproteins. This chain is Alpha-lactalbumin (LALBA), found in Notamacropus eugenii (Tammar wallaby).